Here is a 406-residue protein sequence, read N- to C-terminus: Cysteine desulfurase (406 aa).

Lysine 226 carries the post-translational modification N6-(pyridoxal phosphate)lysine. The Cysteine persulfide intermediate role is filled by cysteine 364.

Belongs to the class-V pyridoxal-phosphate-dependent aminotransferase family. Csd subfamily. As to quaternary structure, homodimer. Interacts with SufE and the SufBCD complex composed of SufB, SufC and SufD. The interaction with SufE is required to mediate the direct transfer of the sulfur atom from the S-sulfanylcysteine. Pyridoxal 5'-phosphate serves as cofactor.

It is found in the cytoplasm. The enzyme catalyses (sulfur carrier)-H + L-cysteine = (sulfur carrier)-SH + L-alanine. The catalysed reaction is L-selenocysteine + AH2 = hydrogenselenide + L-alanine + A + H(+). It functions in the pathway cofactor biosynthesis; iron-sulfur cluster biosynthesis. Its function is as follows. Cysteine desulfurases mobilize the sulfur from L-cysteine to yield L-alanine, an essential step in sulfur metabolism for biosynthesis of a variety of sulfur-containing biomolecules. Component of the suf operon, which is activated and required under specific conditions such as oxidative stress and iron limitation. Acts as a potent selenocysteine lyase in vitro, that mobilizes selenium from L-selenocysteine. Selenocysteine lyase activity is however unsure in vivo. This chain is Cysteine desulfurase, found in Escherichia coli O45:K1 (strain S88 / ExPEC).